Consider the following 130-residue polypeptide: Small ribosomal subunit protein uS9 (130 aa).

Positions 98–130 (LKRAGLLTRDPRMKERKKPGLKKARRSPQFSKR) are disordered. Over residues 111 to 130 (KERKKPGLKKARRSPQFSKR) the composition is skewed to basic residues.

The protein belongs to the universal ribosomal protein uS9 family.

The protein is Small ribosomal subunit protein uS9 of Staphylococcus saprophyticus subsp. saprophyticus (strain ATCC 15305 / DSM 20229 / NCIMB 8711 / NCTC 7292 / S-41).